The chain runs to 621 residues: MIRSTTAKLGKRCATLRVRASPILRPLVATRCITNKADEVFTKLSDENDPKRDAFFNYSWGSWLVNDKQEKAKRVTKFSLEGLTDVLNEIYADSQQLAKTVKSNRIPAPNHKKNLIVTLPHNTMIKDLGTVNPNEKVRVIRMASIHEGKHHRIYKLDTNIDRSFVLRIPYALENGHVIESRLKSEVATMDFAHLKLGINVPKVYCYGVNALNPVRQPFVLEEFIEGKLLMRDWNPLVDDKKDSLPDDNLKSVVEQVSDLQSKLLSMQFNGIGSLYFSKDYERPGEPKKSVYDGESNPDLQGRWIIGPTAERVFWRKKSVLNKEALSKFLGPWSANEPLEVVKNTGLVEAENAKARLALKQADASPEAVDETTLSEQIVSFENLATVGPHLFDSGTTTIPNVKELLKPRLYHPDLDPMNIIVTAEGTPYLLDFEGSSVKPFILHNSPQFVAYDGPKIFDLQEDIPDYEKLVDSEKAQYEFMYKRTRNQFLWDSALNERNNKLISAVAPPVKLLRSPYIAAVERKSDDEYLLIDEALIQLAEVWEVFYKNGLVKDANYPLTFSKETLEKHANDLNAFHEKLISRPFAATQGWIPQDMFENLIKAGILVKESDSSYTVKTENLD.

The transit peptide at methionine 1 to valine 40 directs the protein to the mitochondrion.

Belongs to the AIM9 family.

It localises to the mitochondrion. The sequence is that of Altered inheritance of mitochondria protein 9, mitochondrial (AIM9) from Zygosaccharomyces rouxii (strain ATCC 2623 / CBS 732 / NBRC 1130 / NCYC 568 / NRRL Y-229).